The primary structure comprises 486 residues: Glutamyl-tRNA(Gln) amidotransferase subunit A (486 aa).

Catalysis depends on charge relay system residues Lys-79 and Ser-154. Ser-178 functions as the Acyl-ester intermediate in the catalytic mechanism.

This sequence belongs to the amidase family. GatA subfamily. As to quaternary structure, heterotrimer of A, B and C subunits.

It carries out the reaction L-glutamyl-tRNA(Gln) + L-glutamine + ATP + H2O = L-glutaminyl-tRNA(Gln) + L-glutamate + ADP + phosphate + H(+). Allows the formation of correctly charged Gln-tRNA(Gln) through the transamidation of misacylated Glu-tRNA(Gln) in organisms which lack glutaminyl-tRNA synthetase. The reaction takes place in the presence of glutamine and ATP through an activated gamma-phospho-Glu-tRNA(Gln). In Myxococcus xanthus (strain DK1622), this protein is Glutamyl-tRNA(Gln) amidotransferase subunit A.